Reading from the N-terminus, the 527-residue chain is UDP-glucuronosyltransferase 2A1 (527 aa).

The signal sequence occupies residues 1 to 20 (MLKNILLWSLQLSLLGMSLG). The Extracellular segment spans residues 21 to 490 (GNVLIWPMEG…LSWFQYHSLD (470 aa)). A glycan (N-linked (GlcNAc...) asparagine) is linked at N49. At K134 the chain carries N6-succinyllysine. The N-linked (GlcNAc...) asparagine glycan is linked to N313. Residues 491–507 (VIGFLLACMASAILLVI) traverse the membrane as a helical segment. The Cytoplasmic portion of the chain corresponds to 508 to 527 (KCCLFVFQKIGKTXKKNKRD).

The protein belongs to the UDP-glycosyltransferase family. As to expression, olfactory epithelium. Mainly found in the sustentacular cells and to a lesser extent in Bowman's gland cells. Also expressed in the olfactory sensory neuron nuclei. Neuronal localization within the olfactory bulb is mainly found in the deeper granular cells.

The protein localises to the membrane. It catalyses the reaction glucuronate acceptor + UDP-alpha-D-glucuronate = acceptor beta-D-glucuronoside + UDP + H(+). It carries out the reaction 16beta,17beta-estriol + UDP-alpha-D-glucuronate = 16beta,17beta-estriol 16-O-(beta-D-glucuronate) + UDP + H(+). The enzyme catalyses 16alpha,17alpha-estriol + UDP-alpha-D-glucuronate = 16alpha,17alpha-estriol 16-O-(beta-D-glucuronate) + UDP + H(+). The catalysed reaction is 17alpha-estradiol + UDP-alpha-D-glucuronate = 17alpha-estradiol 17-O-(beta-D-glucuronate) + UDP + H(+). It catalyses the reaction 17alpha-estradiol + UDP-alpha-D-glucuronate = 17alpha-estradiol 3-O-(beta-D-glucuronate) + UDP + H(+). It carries out the reaction 17beta-estradiol + UDP-alpha-D-glucuronate = 17beta-estradiol 3-O-(beta-D-glucuronate) + UDP + H(+). The enzyme catalyses 17beta-estradiol + UDP-alpha-D-glucuronate = 17beta-estradiol 17-O-(beta-D-glucuronate) + UDP + H(+). The catalysed reaction is testosterone + UDP-alpha-D-glucuronate = testosterone 17-O-(beta-D-glucuronate) + UDP + H(+). It catalyses the reaction epitestosterone + UDP-alpha-D-glucuronate = epitestosterone 17-O-(beta-D-glucuronate) + UDP + H(+). It carries out the reaction lithocholate + UDP-alpha-D-glucuronate = lithocholoyl-3-O-(beta-D-glucuronate) + UDP + H(+). The enzyme catalyses lithocholate + UDP-alpha-D-glucuronate = lithocholoyl-24-O-(beta-D-glucuronate) + UDP. The catalysed reaction is deoxycholate + UDP-alpha-D-glucuronate = deoxycholoyl-24-O-(beta-D-glucuronate) + UDP. It catalyses the reaction hyodeoxycholate + UDP-alpha-D-glucuronate = hyodeoxycholate 6-O-(beta-D-glucuronate) + UDP + H(+). It carries out the reaction hyocholate + UDP-alpha-D-glucuronate = hyocholoyl-24-O-(beta-D-glucuronate) + UDP. In terms of biological role, UDP-glucuronosyltransferase (UGT) that catalyzes phase II biotransformation reactions in which lipophilic substrates are conjugated with glucuronic acid to increase the metabolite's water solubility, thereby facilitating excretion into either the urine or bile. Essential for the elimination and detoxification of drugs, xenobiotics and endogenous compounds. Catalyzes the glucuronidation of endogenous steroid hormones such as androgens (testosterones) and estrogens (estradiol and estriol). Contributes to bile acid (BA) detoxification by catalyzing the glucuronidation of BA substrates, which are natural detergents for dietary lipids absorption. Shows a high affinity to aliphatic odorants such as citronellol as well as olfactory tissue specificity, and therefore may be involved in olfaction. This chain is UDP-glucuronosyltransferase 2A1, found in Rattus norvegicus (Rat).